The primary structure comprises 587 residues: ATP-dependent zinc metalloprotease FtsH 2 (587 aa).

At M1–R12 the chain is on the cytoplasmic side. A helical membrane pass occupies residues I13–T33. The Extracellular portion of the chain corresponds to R34 to P102. The helical transmembrane segment at W103 to W123 threads the bilayer. At A124–A587 the chain is on the cytoplasmic side. G192 to T199 is an ATP binding site. Residue H416 participates in Zn(2+) binding. Residue E417 is part of the active site. Zn(2+)-binding residues include H420 and D492.

In the central section; belongs to the AAA ATPase family. This sequence in the C-terminal section; belongs to the peptidase M41 family. In terms of assembly, homohexamer. Zn(2+) serves as cofactor.

The protein localises to the cell membrane. Functionally, acts as a processive, ATP-dependent zinc metallopeptidase for both cytoplasmic and membrane proteins. Plays a role in the quality control of integral membrane proteins. The polypeptide is ATP-dependent zinc metalloprotease FtsH 2 (Symbiobacterium thermophilum (strain DSM 24528 / JCM 14929 / IAM 14863 / T)).